The sequence spans 358 residues: Phospho-N-acetylmuramoyl-pentapeptide-transferase (358 aa).

The next 10 membrane-spanning stretches (helical) occupy residues 3–23, 54–74, 84–104, 114–134, 156–176, 187–207, 231–251, 255–275, 283–303, and 330–350; these read QILF…PALI, GVAI…IGIA, ALLV…DDFI, LTAA…GVLA, ITTV…VVVA, LDGL…IITF, LALV…WNAA, IFMG…LSIT, VVIG…VAVF, and VIIR…GLFY.

Belongs to the glycosyltransferase 4 family. MraY subfamily. Requires Mg(2+) as cofactor.

It is found in the cell membrane. The catalysed reaction is UDP-N-acetyl-alpha-D-muramoyl-L-alanyl-gamma-D-glutamyl-meso-2,6-diaminopimeloyl-D-alanyl-D-alanine + di-trans,octa-cis-undecaprenyl phosphate = di-trans,octa-cis-undecaprenyl diphospho-N-acetyl-alpha-D-muramoyl-L-alanyl-D-glutamyl-meso-2,6-diaminopimeloyl-D-alanyl-D-alanine + UMP. It participates in cell wall biogenesis; peptidoglycan biosynthesis. Its function is as follows. Catalyzes the initial step of the lipid cycle reactions in the biosynthesis of the cell wall peptidoglycan: transfers peptidoglycan precursor phospho-MurNAc-pentapeptide from UDP-MurNAc-pentapeptide onto the lipid carrier undecaprenyl phosphate, yielding undecaprenyl-pyrophosphoryl-MurNAc-pentapeptide, known as lipid I. The sequence is that of Phospho-N-acetylmuramoyl-pentapeptide-transferase from Nocardia farcinica (strain IFM 10152).